The sequence spans 273 residues: Flagellin FljO (273 aa).

This sequence belongs to the bacterial flagellin family. In C.crescentus, the flagellar filament is composed of multiple flagellins of 29 kDa; 27 kDa and 25 kDa.

Its subcellular location is the secreted. It is found in the bacterial flagellum. In terms of biological role, flagellin is the subunit protein which polymerizes to form the filaments of bacterial flagella. The polypeptide is Flagellin FljO (fljO) (Caulobacter vibrioides (strain ATCC 19089 / CIP 103742 / CB 15) (Caulobacter crescentus)).